A 201-amino-acid polypeptide reads, in one-letter code: Ras-related protein Rab-9A (201 aa).

Residue alanine 2 is modified to N-acetylalanine. GTP is bound by residues glycine 17, valine 18, glycine 19, lysine 20, serine 21, serine 22, aspartate 33, serine 34, histidine 38, and threonine 39. Position 21 (serine 21) interacts with Mg(2+). Residues 31 to 42 (KFDSQLFHTIGV) carry the Switch 1 motif. Position 34 is a phosphoserine (serine 34). Positions 39 and 62 each coordinate Mg(2+). Positions 64–78 (AGQERFRSLRTPFYR) match the Switch 2 motif. Residues glycine 65, asparagine 124, lysine 125, aspartate 127, alanine 155, and lysine 156 each contribute to the GTP site. Serine 179 bears the Phosphoserine mark. A Phosphothreonine modification is found at threonine 187. S-geranylgeranyl cysteine attachment occurs at residues cysteine 200 and cysteine 201.

This sequence belongs to the small GTPase superfamily. Rab family. As to quaternary structure, interacts (preferentially in its GTP-bound form) with GCC2 (via its GRIP domain). Interacts (GTP-bound form) with SGSM1; the GDP-bound form has much lower affinity for SGSM1. Interacts with SGSM2. The GTP-bound form but not the GDP-bound form interacts with HPS4. The GTP-bound form but not the GDP-bound form interacts with BLOC-3 complex (heterodimer of HPS1 and HPS4) but does not interact with HPS1 alone. Interacts (GTP-bound form) with NDE1; two RAB9A-GTP molecules lie on the opposite sides of the NDE1 homodimer; the interaction leads to RAB9A-dynein motor tethering. Interacts (GTP-bound form) with NDEL1. Mg(2+) is required as a cofactor.

Its subcellular location is the cell membrane. The protein localises to the endoplasmic reticulum membrane. The protein resides in the golgi apparatus membrane. It localises to the late endosome. It is found in the cytoplasmic vesicle. Its subcellular location is the phagosome membrane. The protein localises to the phagosome. The protein resides in the cytoplasmic vesicle membrane. It localises to the melanosome. The catalysed reaction is GTP + H2O = GDP + phosphate + H(+). Regulated by guanine nucleotide exchange factors (GEFs) which promote the exchange of bound GDP for free GTP. Regulated by GTPase activating proteins (GAPs) which increase the GTP hydrolysis activity. Inhibited by GDP dissociation inhibitors (GDIs). Its function is as follows. The small GTPases Rab are key regulators of intracellular membrane trafficking, from the formation of transport vesicles to their fusion with membranes. Rabs cycle between an inactive GDP-bound form and an active GTP-bound form that is able to recruit to membranes different sets of downstream effectors directly responsible for vesicle formation, movement, tethering and fusion. RAB9A is involved in the transport of proteins between the endosomes and the trans-Golgi network (TGN). Specifically uses NDE1/NDEL1 as an effector to interact with the dynein motor complex in order to control retrograde trafficking of RAB9-associated late endosomes to the TGN. Involved in the recruitment of SGSM2 to melanosomes and is required for the proper trafficking of melanogenic enzymes TYR, TYRP1 and DCT/TYRP2 to melanosomes in melanocytes. This is Ras-related protein Rab-9A from Mus musculus (Mouse).